The chain runs to 561 residues: Inositol phosphate phosphatase SopB (561 aa).

Cys-460 is a catalytic residue. Residues 460–466 carry the CX5R motif motif; sequence CKSGKDR.

This sequence belongs to the phosphatase IpgD/SopB family.

Its subcellular location is the secreted. Functionally, converts phosphatidylinositol 3,4,5-trisphosphate (PtdIns 3,4,5-P3) to PtdIns 3-P and prevents the transition of PtdIns 3-P to PtdIns 3,5-P2. It is one of the known effectors injected by Salmonella into the host cell and is required for invasion and for an efficient generation and maintenance of Salmonella-containing vacuole (SVC). Alteration of the phosphoinositide composition of the plasma membrane causes membrane ruffling and actin cytoskeleton rearrangements. The persistence of PtdIns 3-P diverts the SCV from the endocytic pathway resulting in enlarged vesicles, which are essential to create a favorable environment where Salmonella can replicate and avoid immune defenses of the host cell. The chain is Inositol phosphate phosphatase SopB (sopB) from Salmonella typhimurium (strain LT2 / SGSC1412 / ATCC 700720).